Reading from the N-terminus, the 163-residue chain is Nucleotide-binding protein YajQ (163 aa).

Belongs to the YajQ family.

In terms of biological role, nucleotide-binding protein. The sequence is that of Nucleotide-binding protein YajQ from Salmonella agona (strain SL483).